The primary structure comprises 967 residues: Glutamate receptor 2.6 (967 aa).

The signal sequence occupies residues 1–31 (MSLFNHLLSRALPLWLLFFINFLVLLGKSQQ). Over 32–590 (EVLQVQVGIV…WVFLKPLTRE (559 aa)) the chain is Extracellular. N-linked (GlcNAc...) asparagine glycosylation is found at Asn45, Asn57, Asn121, Asn336, Asn345, Asn424, and Asn550. Residues 591–611 (LWFLTAASFLYIGIMVWIFEY) traverse the membrane as a helical segment. Topologically, residues 612-621 (QASGDFRKQS) are cytoplasmic. A helical transmembrane segment spans residues 622-642 (IINKISNVFYFSFSTLFFAHM). At 643 to 651 (RPSESIFTR) the chain is on the cytoplasmic side. Residues 652 to 672 (VLVVVWCFVLLILTQSYTATL) traverse the membrane as a helical segment. At 673–832 (TSMLTVQELR…DSPIRLDHHS (160 aa)) the chain is on the extracellular side. N-linked (GlcNAc...) asparagine glycosylation occurs at Asn795. The helical transmembrane segment at 833–853 (FEALFTIVFVVSMLLLLAMLV) threads the bilayer. The Cytoplasmic portion of the chain corresponds to 854–967 (CRRYRQESKS…AALFSRIKSA (114 aa)). Over residues 864–874 (GEINANNSPTD) the composition is skewed to polar residues. A disordered region spans residues 864–913 (GEINANNSPTDGNMRAPPNQPTDDNMRAPTSPPIDDQVLEPPGPALNEAD).

The protein belongs to the glutamate-gated ion channel (TC 1.A.10.1) family. In terms of assembly, may form heteromers. In terms of tissue distribution, expressed predominantly in roots.

The protein resides in the membrane. Functionally, glutamate-gated receptor that probably acts as a non-selective cation channel. May be involved in light-signal transduction and calcium homeostasis via the regulation of calcium influx into cells. This Arabidopsis thaliana (Mouse-ear cress) protein is Glutamate receptor 2.6 (GLR2.6).